The chain runs to 112 residues: T cell receptor alpha variable 21 (112 aa).

An N-terminal signal peptide occupies residues 1 to 19 (METLLGLLILWLQLQWVSS). An Ig-like domain is found at 21-112 (QEVTQIPAAL…DSATYLCAVR (92 aa)). 2 N-linked (GlcNAc...) asparagine glycosylation sites follow: Asn41 and Asn82. A disulfide bond links Cys42 and Cys109.

As to quaternary structure, alpha-beta TR is a heterodimer composed of an alpha and beta chain; disulfide-linked. The alpha-beta TR is associated with the transmembrane signaling CD3 coreceptor proteins to form the TR-CD3 (TcR or TCR). The assembly of alpha-beta TR heterodimers with CD3 occurs in the endoplasmic reticulum where a single alpha-beta TR heterodimer associates with one CD3D-CD3E heterodimer, one CD3G-CD3E heterodimer and one CD247 homodimer forming a stable octameric structure. CD3D-CD3E and CD3G-CD3E heterodimers preferentially associate with TR alpha and TR beta chains, respectively. The association of the CD247 homodimer is the last step of TcR assembly in the endoplasmic reticulum and is required for transport to the cell surface.

It localises to the cell membrane. In terms of biological role, v region of the variable domain of T cell receptor (TR) alpha chain that participates in the antigen recognition. Alpha-beta T cell receptors are antigen specific receptors which are essential to the immune response and are present on the cell surface of T lymphocytes. Recognize peptide-major histocompatibility (MH) (pMH) complexes that are displayed by antigen presenting cells (APC), a prerequisite for efficient T cell adaptive immunity against pathogens. Binding of alpha-beta TR to pMH complex initiates TR-CD3 clustering on the cell surface and intracellular activation of LCK that phosphorylates the ITAM motifs of CD3G, CD3D, CD3E and CD247 enabling the recruitment of ZAP70. In turn ZAP70 phosphorylates LAT, which recruits numerous signaling molecules to form the LAT signalosome. The LAT signalosome propagates signal branching to three major signaling pathways, the calcium, the mitogen-activated protein kinase (MAPK) kinase and the nuclear factor NF-kappa-B (NF-kB) pathways, leading to the mobilization of transcription factors that are critical for gene expression and essential for T cell growth and differentiation. The T cell repertoire is generated in the thymus, by V-(D)-J rearrangement. This repertoire is then shaped by intrathymic selection events to generate a peripheral T cell pool of self-MH restricted, non-autoaggressive T cells. Post-thymic interaction of alpha-beta TR with the pMH complexes shapes TR structural and functional avidity. The polypeptide is T cell receptor alpha variable 21 (Homo sapiens (Human)).